Reading from the N-terminus, the 312-residue chain is Gamma-soluble NSF attachment protein (312 aa).

Residues 281 to 312 are disordered; that stretch reads KKKAAAPPQAKPEGTAAPAAEEEEDEYAGGLC. Residues 285–299 are compositionally biased toward low complexity; it reads AAPPQAKPEGTAAPA. Acidic residues predominate over residues 300–312; sequence AEEEEDEYAGGLC.

Belongs to the SNAP family. In terms of assembly, interacts with RAB11FIP5. Interacts with VTI1A.

It is found in the membrane. Its subcellular location is the golgi apparatus. In terms of biological role, required for vesicular transport between the endoplasmic reticulum and the Golgi apparatus. The chain is Gamma-soluble NSF attachment protein from Bos taurus (Bovine).